A 178-amino-acid chain; its full sequence is Single-stranded DNA-binding protein 2 (178 aa).

The region spanning 6–111 (VNKVILVGNL…VVVSQSGTMQ (106 aa)) is the SSB domain. A DNA-binding region spans residues 55-61 (WHRVVLY). The segment at 111–161 (QMLGGRNSAGSGQQQGGWGQPQQPAAPSHSGMPPQQHPANEPPMDFDDDIP) is disordered.

In terms of assembly, homotetramer.

This Salmonella typhi protein is Single-stranded DNA-binding protein 2 (ssb2).